We begin with the raw amino-acid sequence, 445 residues long: Xylose isomerase (445 aa).

Residues H107 and D110 contribute to the active site. Positions 238, 274, 277, 302, 313, 315, and 345 each coordinate Mg(2+).

This sequence belongs to the xylose isomerase family. In terms of assembly, homotetramer. Mg(2+) is required as a cofactor.

Its subcellular location is the cytoplasm. The enzyme catalyses alpha-D-xylose = alpha-D-xylulofuranose. This Bacillus subtilis (strain 168) protein is Xylose isomerase (xylA).